The sequence spans 757 residues: Xylosyl- and glucuronyltransferase LARGE1 (757 aa).

At 1–10 (MLGMCRGRRK) the chain is on the cytoplasmic side. A helical; Signal-anchor for type II membrane protein transmembrane segment spans residues 11–31 (FVAASLALIFIPALTWLYLSS). Residues 32–757 (ANITVKPLPL…LKYMTVDNNS (726 aa)) lie on the Lumenal side of the membrane. The stretch at 50–82 (AVVGAAAEHQSLELRLRDVEEHNNALRREISRT) forms a coiled coil. Residues 76 to 127 (RREISRTPRVPTHSSHPSSSRHGNQLHTHSTEEGTGDSEAKKGAAAGNSSDC) form a disordered region. The segment covering 82–97 (TPRVPTHSSHPSSSRH) has biased composition (low complexity). N-linked (GlcNAc...) asparagine glycans are attached at residues asparagine 123 and asparagine 149. The tract at residues 139-414 (IHIAIVCAGY…FLEYDGNLLR (276 aa)) is xylosyltransferase activity. 2 residues coordinate Mn(2+): aspartate 243 and aspartate 245. N-linked (GlcNAc...) asparagine glycosylation occurs at asparagine 273. A glucuronyltransferase activity region spans residues 415-757 (RELFGCPSET…LKYMTVDNNS (343 aa)). 2 residues coordinate Mn(2+): aspartate 564 and aspartate 566. Asparagine 738 carries an N-linked (GlcNAc...) asparagine glycan.

This sequence in the C-terminal section; belongs to the glycosyltransferase 49 family. The protein in the N-terminal section; belongs to the glycosyltransferase 8 family. Requires Mn(2+) as cofactor.

Its subcellular location is the golgi apparatus membrane. It carries out the reaction 3-O-[beta-D-GlcA-(1-&gt;3)-beta-D-Xyl-(1-&gt;4)-Rib-ol-P-Rib-ol-P-3-beta-D-GalNAc-(1-&gt;3)-beta-D-GlcNAc-(1-&gt;4)-(O-6-P-alpha-D-Man)]-Thr-[protein] + UDP-alpha-D-xylose = 3-O-[alpha-D-Xyl-(1-&gt;3)-beta-D-GlcA-(1-&gt;4)-beta-D-Xyl-(1-&gt;4)-Rib-ol-P-Rib-ol-P-3-beta-D-GalNAc-(1-&gt;3)-beta-D-GlcNAc-(1-&gt;4)-(O-6-P-alpha-D-Man)]-Thr-[protein] + UDP + H(+). It catalyses the reaction 3-O-{(1-&gt;[3)-alpha-D-Xyl-(1-&gt;3)-beta-D-GlcA-(1-&gt;](n)-4)-beta-D-Xyl-(1-&gt;4)-Rib-ol-P-Rib-ol-P-3-beta-D-GalNAc-(1-&gt;3)-beta-D-GlcNAc-(1-&gt;4)-O-6-P-alpha-D-Man}-L-Thr-[protein] + UDP-alpha-D-glucuronate = 3-O-{beta-D-GlcA-(1-&gt;[3)-alpha-D-Xyl-(1-&gt;3)-beta-D-GlcA-(1-&gt;](n)-4)-beta-D-Xyl-(1-&gt;4)-Rib-ol-P-Rib-ol-P-3-beta-D-GalNAc-(1-&gt;3)-beta-D-GlcNAc-(1-&gt;4)-O-6-P-alpha-D-Man}-L-Thr-[protein] + UDP + H(+). The enzyme catalyses 3-O-{beta-D-GlcA-(1-&gt;[3)-alpha-D-Xyl-(1-&gt;3)-beta-D-GlcA-(1-&gt;](n)-4)-beta-D-Xyl-(1-&gt;4)-Rib-ol-P-Rib-ol-P-3-beta-D-GalNAc-(1-&gt;3)-beta-D-GlcNAc-(1-&gt;4)-O-6-P-alpha-D-Man}-L-Thr-[protein] + UDP-alpha-D-xylose = 3-O-{(1-&gt;[3)-alpha-D-Xyl-(1-&gt;3)-beta-D-GlcA-(1-&gt;](n+1)-4)-beta-D-Xyl-(1-&gt;4)-Rib-ol-P-Rib-ol-P-3-beta-D-GalNAc-(1-&gt;3)-beta-D-GlcNAc-(1-&gt;4)-O-6-P-alpha-D-Man}-L-Thr-[protein] + UDP + H(+). It functions in the pathway protein modification; protein glycosylation. In terms of biological role, bifunctional glycosyltransferase with both alpha-1,3-xylosyltransferase and beta-1,3-glucuronyltransferase activities involved in the maturation of alpha-dystroglycan (DAG1) by glycosylation leading to DAG1 binding to laminin G-like domain-containing extracellular proteins with high affinity. Elongates the glucuronyl-beta-1,4-xylose-beta disaccharide primer structure initiated by B4GAT1 by adding repeating units [-3-Xylose-alpha-1,3-GlcA-beta-1-] to produce a heteropolysaccharide. Requires the phosphorylation of core M3 (O-mannosyl trisaccharide) by POMK to elongate the glucuronyl-beta-1,4-xylose-beta disaccharide primer. Plays a key role in skeletal muscle function and regeneration. This is Xylosyl- and glucuronyltransferase LARGE1 from Danio rerio (Zebrafish).